Here is a 296-residue protein sequence, read N- to C-terminus: Mycothiol acetyltransferase (296 aa).

N-acetyltransferase domains lie at 8–146 (RSPE…PPVE) and 151–296 (ISVR…GPPV). Residue Glu-39 participates in 1D-myo-inositol 2-(L-cysteinylamino)-2-deoxy-alpha-D-glucopyranoside binding. Position 76 to 78 (76 to 78 (VVT)) interacts with acetyl-CoA. 1D-myo-inositol 2-(L-cysteinylamino)-2-deoxy-alpha-D-glucopyranoside-binding residues include Glu-178, Lys-220, and Glu-228. Residues 232-234 (VGV) and 239-245 (QGEGLGR) contribute to the acetyl-CoA site. Tyr-266 lines the 1D-myo-inositol 2-(L-cysteinylamino)-2-deoxy-alpha-D-glucopyranoside pocket.

It belongs to the acetyltransferase family. MshD subfamily. Monomer.

It carries out the reaction 1D-myo-inositol 2-(L-cysteinylamino)-2-deoxy-alpha-D-glucopyranoside + acetyl-CoA = mycothiol + CoA + H(+). Catalyzes the transfer of acetyl from acetyl-CoA to desacetylmycothiol (Cys-GlcN-Ins) to form mycothiol. This chain is Mycothiol acetyltransferase, found in Kytococcus sedentarius (strain ATCC 14392 / DSM 20547 / JCM 11482 / CCUG 33030 / NBRC 15357 / NCTC 11040 / CCM 314 / 541) (Micrococcus sedentarius).